Reading from the N-terminus, the 458-residue chain is Argininosuccinate lyase (458 aa).

This sequence belongs to the lyase 1 family. Argininosuccinate lyase subfamily.

Its subcellular location is the cytoplasm. The enzyme catalyses 2-(N(omega)-L-arginino)succinate = fumarate + L-arginine. It participates in amino-acid biosynthesis; L-arginine biosynthesis; L-arginine from L-ornithine and carbamoyl phosphate: step 3/3. This Geobacter metallireducens (strain ATCC 53774 / DSM 7210 / GS-15) protein is Argininosuccinate lyase.